We begin with the raw amino-acid sequence, 475 residues long: Ribulose bisphosphate carboxylase large chain (475 aa).

The propeptide occupies 1-2 (MS). P3 is modified (N-acetylproline). K14 is subject to N6,N6,N6-trimethyllysine. Substrate contacts are provided by N123 and T173. The active-site Proton acceptor is the K175. K177 serves as a coordination point for substrate. 3 residues coordinate Mg(2+): K201, D203, and E204. At K201 the chain carries N6-carboxylysine. The active-site Proton acceptor is the H294. Substrate-binding residues include R295, H327, and S379.

Belongs to the RuBisCO large chain family. Type I subfamily. In terms of assembly, heterohexadecamer of 8 large chains and 8 small chains; disulfide-linked. The disulfide link is formed within the large subunit homodimers. Requires Mg(2+) as cofactor. Post-translationally, the disulfide bond which can form in the large chain dimeric partners within the hexadecamer appears to be associated with oxidative stress and protein turnover.

It is found in the plastid. The protein localises to the chloroplast. The enzyme catalyses 2 (2R)-3-phosphoglycerate + 2 H(+) = D-ribulose 1,5-bisphosphate + CO2 + H2O. The catalysed reaction is D-ribulose 1,5-bisphosphate + O2 = 2-phosphoglycolate + (2R)-3-phosphoglycerate + 2 H(+). In terms of biological role, ruBisCO catalyzes two reactions: the carboxylation of D-ribulose 1,5-bisphosphate, the primary event in carbon dioxide fixation, as well as the oxidative fragmentation of the pentose substrate in the photorespiration process. Both reactions occur simultaneously and in competition at the same active site. The protein is Ribulose bisphosphate carboxylase large chain of Pinus balfouriana (Foxtail pine).